The following is an 89-amino-acid chain: Small ribosomal subunit protein uS15 (89 aa).

The protein belongs to the universal ribosomal protein uS15 family. In terms of assembly, part of the 30S ribosomal subunit. Forms a bridge to the 50S subunit in the 70S ribosome, contacting the 23S rRNA.

Functionally, one of the primary rRNA binding proteins, it binds directly to 16S rRNA where it helps nucleate assembly of the platform of the 30S subunit by binding and bridging several RNA helices of the 16S rRNA. Its function is as follows. Forms an intersubunit bridge (bridge B4) with the 23S rRNA of the 50S subunit in the ribosome. The sequence is that of Small ribosomal subunit protein uS15 from Pseudomonas fluorescens (strain ATCC BAA-477 / NRRL B-23932 / Pf-5).